The primary structure comprises 290 residues: 4-hydroxy-tetrahydrodipicolinate synthase (290 aa).

Residue threonine 44 coordinates pyruvate. Catalysis depends on tyrosine 132, which acts as the Proton donor/acceptor. The Schiff-base intermediate with substrate role is filled by lysine 160. Position 202 (isoleucine 202) interacts with pyruvate.

The protein belongs to the DapA family. As to quaternary structure, homotetramer; dimer of dimers.

Its subcellular location is the cytoplasm. It catalyses the reaction L-aspartate 4-semialdehyde + pyruvate = (2S,4S)-4-hydroxy-2,3,4,5-tetrahydrodipicolinate + H2O + H(+). It functions in the pathway amino-acid biosynthesis; L-lysine biosynthesis via DAP pathway; (S)-tetrahydrodipicolinate from L-aspartate: step 3/4. In terms of biological role, catalyzes the condensation of (S)-aspartate-beta-semialdehyde [(S)-ASA] and pyruvate to 4-hydroxy-tetrahydrodipicolinate (HTPA). This chain is 4-hydroxy-tetrahydrodipicolinate synthase, found in Pelobacter propionicus (strain DSM 2379 / NBRC 103807 / OttBd1).